Here is a 137-residue protein sequence, read N- to C-terminus: Small ribosomal subunit protein uS12 (137 aa).

Residues 1-24 (MPTINQLVRKGRRSQSSKSKAPAL) form a disordered region. A 3-methylthioaspartic acid modification is found at D102.

The protein belongs to the universal ribosomal protein uS12 family. In terms of assembly, part of the 30S ribosomal subunit. Contacts proteins S8 and S17. May interact with IF1 in the 30S initiation complex.

In terms of biological role, with S4 and S5 plays an important role in translational accuracy. Interacts with and stabilizes bases of the 16S rRNA that are involved in tRNA selection in the A site and with the mRNA backbone. Located at the interface of the 30S and 50S subunits, it traverses the body of the 30S subunit contacting proteins on the other side and probably holding the rRNA structure together. The combined cluster of proteins S8, S12 and S17 appears to hold together the shoulder and platform of the 30S subunit. This Pediococcus pentosaceus (strain ATCC 25745 / CCUG 21536 / LMG 10740 / 183-1w) protein is Small ribosomal subunit protein uS12.